Reading from the N-terminus, the 255-residue chain is 5'-methylthioadenosine/S-adenosylhomocysteine nucleosidase (255 aa).

The active-site Proton acceptor is the Glu14. Substrate is bound by residues Gly80, Leu176, and 196 to 197 (ME). The active-site Proton donor is the Asp220.

This sequence belongs to the PNP/UDP phosphorylase family. MtnN subfamily.

The enzyme catalyses S-adenosyl-L-homocysteine + H2O = S-(5-deoxy-D-ribos-5-yl)-L-homocysteine + adenine. It catalyses the reaction S-methyl-5'-thioadenosine + H2O = 5-(methylsulfanyl)-D-ribose + adenine. The catalysed reaction is 5'-deoxyadenosine + H2O = 5-deoxy-D-ribose + adenine. The protein operates within amino-acid biosynthesis; L-methionine biosynthesis via salvage pathway; S-methyl-5-thio-alpha-D-ribose 1-phosphate from S-methyl-5'-thioadenosine (hydrolase route): step 1/2. Its function is as follows. Catalyzes the irreversible cleavage of the glycosidic bond in both 5'-methylthioadenosine (MTA) and S-adenosylhomocysteine (SAH/AdoHcy) to adenine and the corresponding thioribose, 5'-methylthioribose and S-ribosylhomocysteine, respectively. Also cleaves 5'-deoxyadenosine, a toxic by-product of radical S-adenosylmethionine (SAM) enzymes, into 5-deoxyribose and adenine. The protein is 5'-methylthioadenosine/S-adenosylhomocysteine nucleosidase (mtnN) of Mycobacterium bovis (strain ATCC BAA-935 / AF2122/97).